Reading from the N-terminus, the 110-residue chain is MSIPQSNTSLSAVIAVDQFDPSSGGQGVYDTPLGITNPPIDELLDRVSSKYALVIYAAKRARQINDHYNQLGEGILEYVGPLVEPGLQEKPLSIAMREIHADLLEHTEGE.

Belongs to the RNA polymerase subunit omega family. In terms of assembly, the RNAP catalytic core consists of 2 alpha, 1 beta, 1 beta' and 1 omega subunit. When a sigma factor is associated with the core the holoenzyme is formed, which can initiate transcription.

The enzyme catalyses RNA(n) + a ribonucleoside 5'-triphosphate = RNA(n+1) + diphosphate. Promotes RNA polymerase assembly. Latches the N- and C-terminal regions of the beta' subunit thereby facilitating its interaction with the beta and alpha subunits. The sequence is that of DNA-directed RNA polymerase subunit omega from Mycobacterium leprae (strain Br4923).